The sequence spans 333 residues: Adenosine deaminase (333 aa).

Zn(2+) is bound by residues histidine 12 and histidine 14. Residues histidine 14, aspartate 16, and glycine 170 each contribute to the substrate site. Residue histidine 197 coordinates Zn(2+). The active-site Proton donor is glutamate 200. Aspartate 278 lines the Zn(2+) pocket. Aspartate 279 contributes to the substrate binding site.

The protein belongs to the metallo-dependent hydrolases superfamily. Adenosine and AMP deaminases family. Adenosine deaminase subfamily. Zn(2+) is required as a cofactor.

The catalysed reaction is adenosine + H2O + H(+) = inosine + NH4(+). It carries out the reaction 2'-deoxyadenosine + H2O + H(+) = 2'-deoxyinosine + NH4(+). Catalyzes the hydrolytic deamination of adenosine and 2-deoxyadenosine. The protein is Adenosine deaminase of Salmonella paratyphi C (strain RKS4594).